A 150-amino-acid chain; its full sequence is Calmodulin (150 aa).

EF-hand domains are found at residues 9–44 (EQIAEFREAFSLFDRDQDGNITSNELGVVMRSLGQS), 45–80 (PTAAELQDMINEVDADGNGTIDFTEFLTMMARKMKD), 82–117 (DNEEEVREAFKVFDKDGNGYITVEELTHVLTSLGER), and 118–150 (LSQEEVADMIREADTDGDGVINYEEFSRVISSK). Positions 22, 24, 26, 28, 33, 58, 60, 62, 64, 69, 95, 97, 99, 101, 106, 131, 133, 135, and 142 each coordinate Ca(2+).

This sequence belongs to the calmodulin family. In terms of assembly, interacts with rng2.

It is found in the cytoplasm. The protein localises to the cytoskeleton. It localises to the microtubule organizing center. The protein resides in the spindle pole body. Functionally, calmodulin mediates the control of a large number of enzymes, ion channels and other proteins by Ca(2+). Among the enzymes to be stimulated by the calmodulin-Ca(2+) complex are a number of protein kinases and phosphatases. The chain is Calmodulin (cam1) from Schizosaccharomyces pombe (strain 972 / ATCC 24843) (Fission yeast).